Reading from the N-terminus, the 544-residue chain is Putative lipase ATG15 (544 aa).

The Cytoplasmic segment spans residues 1–45; the sequence is MVADFDSGWYEGAGDELGQGARNGVLRERLGGNEKAQVVRSRRKA. Residues 46-66 traverse the membrane as a helical; Signal-anchor for type II membrane protein segment; sequence VAWNVLMVLGLILYVLYSACF. The Lumenal segment spans residues 67–544; sequence AQARQWWRTN…NWFGYCTEYA (478 aa). N-linked (GlcNAc...) asparagine glycosylation is found at asparagine 200, asparagine 229, and asparagine 234. The active-site Charge relay system is serine 362. The tract at residues 508–530 is disordered; sequence PMPSSVASKPTPTPTSPGSPSST.

Belongs to the AB hydrolase superfamily. Lipase family. Binds to both phosphatidylinositol (PI) and phosphatidylinositol 3,5-bisphosphate (PIP2).

It is found in the endosome. The protein resides in the multivesicular body membrane. Its subcellular location is the prevacuolar compartment membrane. The catalysed reaction is a triacylglycerol + H2O = a diacylglycerol + a fatty acid + H(+). Functionally, lipase which is essential for lysis of subvacuolar cytoplasm to vacuole targeted bodies and intravacuolar autophagic bodies. Involved in the lysis of intravacuolar multivesicular body (MVB) vesicles. The intravacuolar membrane disintegration by ATG15 is critical to life span extension. In Eremothecium gossypii (strain ATCC 10895 / CBS 109.51 / FGSC 9923 / NRRL Y-1056) (Yeast), this protein is Putative lipase ATG15 (ATG15).